The sequence spans 167 residues: 6,7-dimethyl-8-ribityllumazine synthase (167 aa).

Residues Phe24, 58-60 (ALE), and 82-84 (AVV) contribute to the 5-amino-6-(D-ribitylamino)uracil site. Residue 87–88 (ET) coordinates (2S)-2-hydroxy-3-oxobutyl phosphate. His90 serves as the catalytic Proton donor. Residue Asn115 coordinates 5-amino-6-(D-ribitylamino)uracil. Residue Arg129 coordinates (2S)-2-hydroxy-3-oxobutyl phosphate.

It belongs to the DMRL synthase family.

The enzyme catalyses (2S)-2-hydroxy-3-oxobutyl phosphate + 5-amino-6-(D-ribitylamino)uracil = 6,7-dimethyl-8-(1-D-ribityl)lumazine + phosphate + 2 H2O + H(+). The protein operates within cofactor biosynthesis; riboflavin biosynthesis; riboflavin from 2-hydroxy-3-oxobutyl phosphate and 5-amino-6-(D-ribitylamino)uracil: step 1/2. In terms of biological role, catalyzes the formation of 6,7-dimethyl-8-ribityllumazine by condensation of 5-amino-6-(D-ribitylamino)uracil with 3,4-dihydroxy-2-butanone 4-phosphate. This is the penultimate step in the biosynthesis of riboflavin. This chain is 6,7-dimethyl-8-ribityllumazine synthase, found in Cupriavidus pinatubonensis (strain JMP 134 / LMG 1197) (Cupriavidus necator (strain JMP 134)).